A 266-amino-acid chain; its full sequence is uncharacterized protein (266 aa).

Residues 12–28 form a helical membrane-spanning segment; that stretch reads ILAAGLAIGCAGGYYAY. An FAD-binding FR-type domain is found at 40 to 140; the sequence is EIYAPFTVNK…RGPFKTTKLD (101 aa).

It belongs to the flavoprotein pyridine nucleotide cytochrome reductase family. It depends on FAD as a cofactor.

The protein localises to the mitochondrion outer membrane. This is an uncharacterized protein from Schizosaccharomyces pombe (strain 972 / ATCC 24843) (Fission yeast).